Here is a 391-residue protein sequence, read N- to C-terminus: Casein kinase II subunit alpha (391 aa).

The interaction with beta subunit stretch occupies residues 36 to 41; the sequence is QDDYQL. Residues 39 to 324 form the Protein kinase domain; the sequence is YQLVRKLGRG…AREAMEHPYF (286 aa). Residues 45 to 53 and Lys68 each bind ATP; that span reads LGRGKYSEV. Catalysis depends on Asp156, which acts as the Proton acceptor. The span at 335 to 346 shows a compositional bias: polar residues; that stretch reads GSSNMPGGSTPV. The segment at 335–363 is disordered; sequence GSSNMPGGSTPVSSASMMSGISSVPTPSP. A compositionally biased stretch (low complexity) spans 347-357; sequence SSASMMSGISS.

This sequence belongs to the protein kinase superfamily. Ser/Thr protein kinase family. CK2 subfamily. In terms of assembly, tetramer composed of an alpha chain, an alpha' and two beta chains. Interacts with RNPS1.

The protein localises to the nucleus. The enzyme catalyses L-seryl-[protein] + ATP = O-phospho-L-seryl-[protein] + ADP + H(+). It carries out the reaction L-threonyl-[protein] + ATP = O-phospho-L-threonyl-[protein] + ADP + H(+). In terms of biological role, catalytic subunit of a constitutively active serine/threonine-protein kinase complex that phosphorylates a large number of substrates containing acidic residues C-terminal to the phosphorylated serine or threonine. Regulates numerous cellular processes, such as cell cycle progression, apoptosis and transcription, as well as viral infection. May act as a regulatory node which integrates and coordinates numerous signals leading to an appropriate cellular response. During mitosis, functions as a component of the p53/TP53-dependent spindle assembly checkpoint (SAC) that maintains cyclin-B-CDK1 activity and G2 arrest in response to spindle damage. Can also negatively regulate apoptosis. Phosphorylates the caspases CASP9 and CASP2 and the apoptotic regulator NOL3. Phosphorylation protects CASP9 from cleavage and activation by CASP8, and inhibits the dimerization of CASP2 and activation of CASP8. Plays an important role in the circadian clock function by phosphorylating BMAL1. The chain is Casein kinase II subunit alpha (CSNK2A1) from Gallus gallus (Chicken).